The sequence spans 132 residues: Interferon-induced transmembrane protein 5 (132 aa).

A compositionally biased stretch (basic and acidic residues) spans 1 to 11 (MDTAYPREDTR). Residues 1 to 21 (MDTAYPREDTRAPTPSKAGAH) are disordered. Residues 1–36 (MDTAYPREDTRAPTPSKAGAHTALTLGAPHPPPRDH) lie on the Extracellular side of the membrane. A helical transmembrane segment spans residues 37–57 (LIWSVFSTLYLNLCCLGFLAL). S-palmitoyl cysteine attachment occurs at residues cysteine 50, cysteine 51, and cysteine 84. Topologically, residues 58 to 86 (AYSIKARDQKVVGDLEAARRFGSKAKCYN) are cytoplasmic. A helical membrane pass occupies residues 87 to 107 (ILAAMWTLVPPLLLLGLVVTG). Over 108–132 (ALHLARLAKDSAAFFSTKFDDADYD) the chain is Extracellular.

Belongs to the CD225/Dispanin family. As to quaternary structure, interacts with FKBP11. Palmitoylated. Detected in osteoblasts and fibroblasts (at protein level). Detected in bone.

The protein resides in the cell membrane. In terms of biological role, required for normal bone mineralization. In Homo sapiens (Human), this protein is Interferon-induced transmembrane protein 5 (IFITM5).